The primary structure comprises 256 residues: 1-(5-phosphoribosyl)-5-[(5-phosphoribosylamino)methylideneamino] imidazole-4-carboxamide isomerase (256 aa).

Aspartate 8 acts as the Proton acceptor in catalysis. Residue aspartate 130 is the Proton donor of the active site.

Belongs to the HisA/HisF family.

It localises to the cytoplasm. It carries out the reaction 1-(5-phospho-beta-D-ribosyl)-5-[(5-phospho-beta-D-ribosylamino)methylideneamino]imidazole-4-carboxamide = 5-[(5-phospho-1-deoxy-D-ribulos-1-ylimino)methylamino]-1-(5-phospho-beta-D-ribosyl)imidazole-4-carboxamide. Its pathway is amino-acid biosynthesis; L-histidine biosynthesis; L-histidine from 5-phospho-alpha-D-ribose 1-diphosphate: step 4/9. This chain is 1-(5-phosphoribosyl)-5-[(5-phosphoribosylamino)methylideneamino] imidazole-4-carboxamide isomerase, found in Chlorobium luteolum (strain DSM 273 / BCRC 81028 / 2530) (Pelodictyon luteolum).